The following is a 231-amino-acid chain: Protein fmp52-2, mitochondrial (231 aa).

The transit peptide at 1–46 directs the protein to the mitochondrion; the sequence is MTMTTAAVFGCTGAVGSQILATLLAIDTFPSVKTISRRLPNVQSPK.

This sequence belongs to the FMP52 family.

The protein resides in the mitochondrion outer membrane. The chain is Protein fmp52-2, mitochondrial (fmp522) from Neosartorya fischeri (strain ATCC 1020 / DSM 3700 / CBS 544.65 / FGSC A1164 / JCM 1740 / NRRL 181 / WB 181) (Aspergillus fischerianus).